A 298-amino-acid chain; its full sequence is Lipoyl synthase (298 aa).

[4Fe-4S] cluster contacts are provided by cysteine 40, cysteine 45, cysteine 51, cysteine 67, cysteine 71, cysteine 74, and serine 280. One can recognise a Radical SAM core domain in the interval 53 to 269; sequence AVRRTATFMI…KEIAMQKGFS (217 aa).

This sequence belongs to the radical SAM superfamily. Lipoyl synthase family. The cofactor is [4Fe-4S] cluster.

Its subcellular location is the cytoplasm. It carries out the reaction [[Fe-S] cluster scaffold protein carrying a second [4Fe-4S](2+) cluster] + N(6)-octanoyl-L-lysyl-[protein] + 2 oxidized [2Fe-2S]-[ferredoxin] + 2 S-adenosyl-L-methionine + 4 H(+) = [[Fe-S] cluster scaffold protein] + N(6)-[(R)-dihydrolipoyl]-L-lysyl-[protein] + 4 Fe(3+) + 2 hydrogen sulfide + 2 5'-deoxyadenosine + 2 L-methionine + 2 reduced [2Fe-2S]-[ferredoxin]. The protein operates within protein modification; protein lipoylation via endogenous pathway; protein N(6)-(lipoyl)lysine from octanoyl-[acyl-carrier-protein]. Catalyzes the radical-mediated insertion of two sulfur atoms into the C-6 and C-8 positions of the octanoyl moiety bound to the lipoyl domains of lipoate-dependent enzymes, thereby converting the octanoylated domains into lipoylated derivatives. This is Lipoyl synthase from Bacillus subtilis (strain 168).